The following is a 144-amino-acid chain: Crossover junction endodeoxyribonuclease Hjc (144 aa).

Glutamate 12 provides a ligand contact to Mg(2+). The active site involves serine 32. The Mg(2+) site is built by aspartate 42 and glutamate 55.

Belongs to the Holliday junction resolvase Hjc family. Homodimer; forms a 2:1 complex with Hel308 (Hjm). May form a complex with Holliday junction DNA, Hjc and Hjm. Requires Mg(2+) as cofactor.

The enzyme catalyses Endonucleolytic cleavage at a junction such as a reciprocal single-stranded crossover between two homologous DNA duplexes (Holliday junction).. With respect to regulation, cleavage stimulated by PCNA123 and PCNA323 and by RadC2. A structure-specific endonuclease that resolves Holliday junction (HJ) intermediates during genetic recombination. Cleaves 4-way DNA junctions introducing paired nicks in opposing strands, leaving a 5'-terminal phosphate and a 3'-terminal hydroxyl group that are subsequently ligated to produce recombinant products. Inhibits the helicase activity of Hel308 (Hjm). The sequence is that of Crossover junction endodeoxyribonuclease Hjc from Sulfurisphaera tokodaii (strain DSM 16993 / JCM 10545 / NBRC 100140 / 7) (Sulfolobus tokodaii).